Consider the following 78-residue polypeptide: Sec-independent protein translocase protein TatA (78 aa).

The chain crosses the membrane as a helical span at residues 1–21 (MGSLSIWHWIVVIGVVLLLFG). The segment covering 42–60 (GLQDDEKTAEKPEPVKSID) has biased composition (basic and acidic residues). A disordered region spans residues 42–78 (GLQDDEKTAEKPEPVKSIDHTAPPAAAPRTDVGSKVV).

It belongs to the TatA/E family. As to quaternary structure, the Tat system comprises two distinct complexes: a TatABC complex, containing multiple copies of TatA, TatB and TatC subunits, and a separate TatA complex, containing only TatA subunits. Substrates initially bind to the TatABC complex, which probably triggers association of the separate TatA complex to form the active translocon.

Its subcellular location is the cell inner membrane. Part of the twin-arginine translocation (Tat) system that transports large folded proteins containing a characteristic twin-arginine motif in their signal peptide across membranes. TatA could form the protein-conducting channel of the Tat system. The protein is Sec-independent protein translocase protein TatA of Rhodopseudomonas palustris (strain BisB18).